Here is a 252-residue protein sequence, read N- to C-terminus: 2-succinyl-6-hydroxy-2,4-cyclohexadiene-1-carboxylate synthase (252 aa).

It belongs to the AB hydrolase superfamily. MenH family. Monomer.

It catalyses the reaction 5-enolpyruvoyl-6-hydroxy-2-succinyl-cyclohex-3-ene-1-carboxylate = (1R,6R)-6-hydroxy-2-succinyl-cyclohexa-2,4-diene-1-carboxylate + pyruvate. The protein operates within quinol/quinone metabolism; 1,4-dihydroxy-2-naphthoate biosynthesis; 1,4-dihydroxy-2-naphthoate from chorismate: step 3/7. Its pathway is quinol/quinone metabolism; menaquinone biosynthesis. Catalyzes a proton abstraction reaction that results in 2,5-elimination of pyruvate from 2-succinyl-5-enolpyruvyl-6-hydroxy-3-cyclohexene-1-carboxylate (SEPHCHC) and the formation of 2-succinyl-6-hydroxy-2,4-cyclohexadiene-1-carboxylate (SHCHC). The protein is 2-succinyl-6-hydroxy-2,4-cyclohexadiene-1-carboxylate synthase of Citrobacter koseri (strain ATCC BAA-895 / CDC 4225-83 / SGSC4696).